Reading from the N-terminus, the 407-residue chain is Resuscitation-promoting factor RpfA (407 aa).

An N-terminal signal peptide occupies residues 1–33 (MSGRHRKPTTSNVSVAKIAFTGAVLGGGGIAMA). Disordered stretches follow at residues 142–253 (VNGE…ADLA) and 271–371 (LPAA…AETP). The segment covering 148-159 (PLAPPPADPAPP) has biased composition (pro residues). The span at 160 to 170 (VELAANDLPAP) shows a compositional bias: low complexity. Positions 171–193 (LGEPLPAAPADPAPPADLAPPAP) are enriched in pro residues. Tandem repeats lie at residues 178-185 (APADPAPP) and 186-193 (ADLAPPAP). The tract at residues 178-359 (APADPAPPAD…PDPQPADAPP (182 aa)) is 12 X 8 AA approximate repeats of A-P-A-D-L-A-P-P. Positions 194–210 (ADVAPPVELAVNDLPAP) are enriched in low complexity. Residues 211–249 (LGEPLPAAPADPAPPADLAPPAPADLAPPAPADLAPPAP) are compositionally biased toward pro residues. 10 repeat units span residues 218 to 225 (APADPAPP), 226 to 233 (ADLAPPAP), 240 to 247 (APADLAPP), 248 to 255 (APADLAPP), 274 to 281 (APAELAPP), 287 to 294 (ASADLAPP), 295 to 302 (APADLAPP), 303 to 310 (APAELAPP), 311 to 318 (APADLAPP), and 353 to 359 (QPADAPP). Low complexity predominate over residues 274–292 (APAELAPPADLAPASADLA). 2 stretches are compositionally biased toward pro residues: residues 293-312 (PPAP…PPAP) and 350-361 (PDPQPADAPPPG).

This sequence belongs to the transglycosylase family. Rpf subfamily.

Functionally, factor that stimulates resuscitation of dormant cells. Has peptidoglycan (PG) hydrolytic activity. This Mycobacterium tuberculosis (strain CDC 1551 / Oshkosh) protein is Resuscitation-promoting factor RpfA (rpfA).